A 151-amino-acid chain; its full sequence is S-protein homolog 27 (151 aa).

Residues N91 and N123 are each glycosylated (N-linked (GlcNAc...) asparagine).

This sequence belongs to the plant self-incompatibility (S1) protein family.

The protein localises to the secreted. This is S-protein homolog 27 from Arabidopsis thaliana (Mouse-ear cress).